Consider the following 528-residue polypeptide: Inositol-3-phosphate synthase (528 aa).

NAD(+)-binding residues include Gly-66, Gly-67, Asn-68, Asn-69, Asp-140, Gln-187, Arg-190, Thr-228, Ala-229, Asn-230, Thr-231, Gly-279, Asp-304, Ser-307, Asn-338, Asn-339, Asp-340, Lys-353, Gly-392, Asp-393, Asp-421, and Ser-422.

The protein belongs to the myo-inositol 1-phosphate synthase family. NAD(+) is required as a cofactor.

The protein localises to the cytoplasm. It is found in the cytosol. The enzyme catalyses D-glucose 6-phosphate = 1D-myo-inositol 3-phosphate. It functions in the pathway polyol metabolism; myo-inositol biosynthesis; myo-inositol from D-glucose 6-phosphate: step 1/2. Its activity is regulated as follows. Activated by ammonium ions. Functionally, key enzyme in myo-inositol biosynthesis pathway that catalyzes the conversion of glucose 6-phosphate to 1-myo-inositol 1-phosphate in a NAD-dependent manner. Rate-limiting enzyme in the synthesis of all inositol-containing compounds. De novo-synthesized myo-inositol is essential for incorporation into GPI (glycosylphosphatidylinositol) glycolipids in the bloodstream form. In Trypanosoma brucei brucei, this protein is Inositol-3-phosphate synthase.